Here is a 253-residue protein sequence, read N- to C-terminus: Triosephosphate isomerase, cytosolic (253 aa).

Residues Asn10 and Lys12 each coordinate substrate. His96 serves as the catalytic Electrophile. The Proton acceptor role is filled by Glu166.

Belongs to the triosephosphate isomerase family. As to quaternary structure, homodimer.

It is found in the cytoplasm. It catalyses the reaction D-glyceraldehyde 3-phosphate = dihydroxyacetone phosphate. It functions in the pathway carbohydrate biosynthesis; gluconeogenesis. The protein operates within carbohydrate degradation; glycolysis; D-glyceraldehyde 3-phosphate from glycerone phosphate: step 1/1. The protein is Triosephosphate isomerase, cytosolic of Coptis japonica (Japanese goldthread).